A 6486-amino-acid chain; its full sequence is Tyrocidine synthase 3 (6486 aa).

The tract at residues 466 to 1038 (IFELIAEQAS…VAELARFLSR (573 aa)) is domain 1 (asparagine-activating). 6 Carrier domains span residues 965 to 1040 (APQN…SRSE), 2002 to 2077 (APRN…AAAR), 3040 to 3115 (APTN…ATSG), 4075 to 4150 (AAQN…AESA), 5119 to 5194 (APRS…EETA), and 6162 to 6237 (APRN…THKR). Residues Ser-1000, Ser-2037, Ser-3075, Ser-4110, Ser-5154, and Ser-6197 each carry the O-(pantetheine 4'-phosphoryl)serine modification. The domain 2 (glutamine-activating) stretch occupies residues 1521-2070 (YEEYALTYRE…FESPTIAGLA (550 aa)). Residues 2536–3113 (NKTLQALFEE…IKALAQYVAT (578 aa)) form a domain 3 (tyrosine-activating) region. The domain 4 (valine-activating) stretch occupies residues 3590–4149 (EHAAVVMDGQ…HELAAHIAES (560 aa)). The segment at 4606-5203 (YPTDKTFQKL…AKGNVFSIEP (598 aa)) is domain 5 (ornithine-activating). The interval 5658–6245 (LHQLFEEQVD…KRFESRYGTA (588 aa)) is domain 6 (leucine-activating).

Belongs to the ATP-dependent AMP-binding enzyme family. As to quaternary structure, large multienzyme complex of TycA, TycB and TycC. Pantetheine 4'-phosphate serves as cofactor.

The protein operates within antibiotic biosynthesis; tyrocidine biosynthesis. In terms of biological role, incorporates six amino acids (for tyrocidine A, Asn, Gln, Tyr, Val, Orn, and Leu) in their L-configuration into the peptide product. The polypeptide is Tyrocidine synthase 3 (tycC) (Brevibacillus parabrevis).